The following is a 181-amino-acid chain: Oligoribonuclease (181 aa).

The 164-residue stretch at leucine 8–methionine 171 folds into the Exonuclease domain. The active site involves tyrosine 129.

Belongs to the oligoribonuclease family.

The protein resides in the cytoplasm. In terms of biological role, 3'-to-5' exoribonuclease specific for small oligoribonucleotides. In Chromobacterium violaceum (strain ATCC 12472 / DSM 30191 / JCM 1249 / CCUG 213 / NBRC 12614 / NCIMB 9131 / NCTC 9757 / MK), this protein is Oligoribonuclease.